The following is a 316-amino-acid chain: MSFASEMKNELTRIETDLCCSKAELAALIRMNGNLNIQNMQWVINVQSENAAIARRVYSLTKKIFGVDIELLVRKKMKLKKNNVYICRIKMKTKEILDELSILQDGQFVQHIDQSLIKEECCKRSYLRGAFLAGGSVNNPETSSYHLEIFSLYESHSEGLTEMMNGYGLNAKTLERKKGYISYLKEAEKISDFLSIIGGYQALLKFEDVRIVRDMRNSVNRLVNCETANLNKTIGAAMRQVENIRLIDEEIGIDELPERLREIARLRVQHQDISLKELGEMVSTGVISKSGVNHRLRKIDEIAEKLRNGEHIELKK.

A DNA-binding region (H-T-H motif) is located at residues 274-308 (SLKELGEMVSTGVISKSGVNHRLRKIDEIAEKLRN).

It belongs to the WhiA family.

Its function is as follows. Involved in cell division and chromosome segregation. The protein is Probable cell division protein WhiA of Macrococcus caseolyticus (strain JCSC5402) (Macrococcoides caseolyticum).